The sequence spans 593 residues: ABC1 family protein lscO (593 aa).

2 disordered regions span residues Met-1–Lys-29 and Pro-441–Lys-467. 2 stretches are compositionally biased toward basic and acidic residues: residues Met-8–Thr-22 and Gln-457–Lys-467.

It belongs to the protein kinase superfamily. ADCK protein kinase family.

Functionally, ABC1 family protein; part of the gene cluster that mediates the biosynthesis of the lipopeptide antibiotics leucinostatins that show extensive biological activities, including antimalarial, antiviral, antibacterial, antifungal, and antitumor activities, as well as phytotoxic. The function of lcsO within the leucinostatins biosynthesis has not been identified yet. The polypeptide is ABC1 family protein lscO (Purpureocillium lilacinum (Paecilomyces lilacinus)).